Reading from the N-terminus, the 279-residue chain is L-ascorbate peroxidase 5, peroxisomal (279 aa).

Residue His39 is the Proton acceptor of the active site. Residues 111–134 (PFTPGRKDADSADDGELPNPNEGA) form a disordered region. His158 contacts heme b. Thr159, Thr175, and Asp182 together coordinate K(+). The helical transmembrane segment at 251–271 (AVTQQTLGIAVAAAVVIFTIC) threads the bilayer. The short motif at 272-279 (YEASRRGK) is the AKR2A-binding sequence (ABS) required for peroxisome membrane targeting element.

This sequence belongs to the peroxidase family. Ascorbate peroxidase subfamily. Interacts with AKR2A and AKR2B. Heme b serves as cofactor.

Its subcellular location is the peroxisome membrane. It carries out the reaction L-ascorbate + H2O2 = L-dehydroascorbate + 2 H2O. Its function is as follows. Plays a key role in hydrogen peroxide removal. This Arabidopsis thaliana (Mouse-ear cress) protein is L-ascorbate peroxidase 5, peroxisomal (APX5).